A 119-amino-acid chain; its full sequence is Large ribosomal subunit protein uL24 (119 aa).

Belongs to the universal ribosomal protein uL24 family. As to quaternary structure, part of the 50S ribosomal subunit.

One of two assembly initiator proteins, it binds directly to the 5'-end of the 23S rRNA, where it nucleates assembly of the 50S subunit. Its function is as follows. Located at the polypeptide exit tunnel on the outside of the subunit. The sequence is that of Large ribosomal subunit protein uL24 from Methanococcus maripaludis (strain C5 / ATCC BAA-1333).